Here is a 272-residue protein sequence, read N- to C-terminus: Putative phosphoenolpyruvate synthase regulatory protein (272 aa).

Residue 152-159 (GVSRCGKT) participates in ADP binding.

Belongs to the pyruvate, phosphate/water dikinase regulatory protein family. PSRP subfamily.

It carries out the reaction [pyruvate, water dikinase] + ADP = [pyruvate, water dikinase]-phosphate + AMP + H(+). It catalyses the reaction [pyruvate, water dikinase]-phosphate + phosphate + H(+) = [pyruvate, water dikinase] + diphosphate. Functionally, bifunctional serine/threonine kinase and phosphorylase involved in the regulation of the phosphoenolpyruvate synthase (PEPS) by catalyzing its phosphorylation/dephosphorylation. The chain is Putative phosphoenolpyruvate synthase regulatory protein from Pseudomonas putida (strain ATCC 47054 / DSM 6125 / CFBP 8728 / NCIMB 11950 / KT2440).